A 555-amino-acid polypeptide reads, in one-letter code: Formate--tetrahydrofolate ligase (555 aa).

64-71 contributes to the ATP binding site; that stretch reads TKAGIGKT.

Belongs to the formate--tetrahydrofolate ligase family.

The catalysed reaction is (6S)-5,6,7,8-tetrahydrofolate + formate + ATP = (6R)-10-formyltetrahydrofolate + ADP + phosphate. Its pathway is one-carbon metabolism; tetrahydrofolate interconversion. This Phocaeicola vulgatus (strain ATCC 8482 / DSM 1447 / JCM 5826 / CCUG 4940 / NBRC 14291 / NCTC 11154) (Bacteroides vulgatus) protein is Formate--tetrahydrofolate ligase.